Consider the following 255-residue polypeptide: tRNA-cytidine(32) 2-sulfurtransferase (255 aa).

The PP-loop motif signature appears at Ser37–Ser42. Residues Cys112, Cys115, and Cys202 each coordinate [4Fe-4S] cluster.

It belongs to the TtcA family. As to quaternary structure, homodimer. The cofactor is Mg(2+). [4Fe-4S] cluster serves as cofactor.

It localises to the cytoplasm. It catalyses the reaction cytidine(32) in tRNA + S-sulfanyl-L-cysteinyl-[cysteine desulfurase] + AH2 + ATP = 2-thiocytidine(32) in tRNA + L-cysteinyl-[cysteine desulfurase] + A + AMP + diphosphate + H(+). It functions in the pathway tRNA modification. Its function is as follows. Catalyzes the ATP-dependent 2-thiolation of cytidine in position 32 of tRNA, to form 2-thiocytidine (s(2)C32). The sulfur atoms are provided by the cysteine/cysteine desulfurase (IscS) system. The polypeptide is tRNA-cytidine(32) 2-sulfurtransferase (Citrifermentans bemidjiense (strain ATCC BAA-1014 / DSM 16622 / JCM 12645 / Bem) (Geobacter bemidjiensis)).